Consider the following 222-residue polypeptide: PKHD-type hydroxylase P9301_13621 (222 aa).

The Fe2OG dioxygenase domain maps to 81–175; that stretch reads KIHGIMFTKS…RLVCVGWIES (95 aa). Fe cation is bound by residues His-99, Asp-101, and His-156. Arg-166 serves as a coordination point for 2-oxoglutarate.

It depends on Fe(2+) as a cofactor. Requires L-ascorbate as cofactor.

The polypeptide is PKHD-type hydroxylase P9301_13621 (Prochlorococcus marinus (strain MIT 9301)).